The following is a 370-amino-acid chain: Cytochrome b (370 aa).

Helical transmembrane passes span 25 to 45 (FGSM…FLAV), 69 to 90 (WMMQ…YIHI), 105 to 125 (WLSG…GYVL), and 170 to 190 (FFAL…LHIL). Residues H75 and H89 each contribute to the heme b site. H174 and H188 together coordinate heme b. An a ubiquinone-binding site is contributed by H193. 4 helical membrane passes run 218 to 238 (YKDM…VSFF), 280 to 300 (LGGA…PFTH), 312 to 332 (LMQL…WTAT), and 339 to 358 (FTTI…ISNP).

This sequence belongs to the cytochrome b family. The cytochrome bc1 complex contains 3 respiratory subunits (MT-CYB, CYC1 and UQCRFS1), 2 core proteins (UQCRC1 and UQCRC2) and probably 6 low-molecular weight proteins. The cofactor is heme b.

It localises to the mitochondrion inner membrane. Component of the ubiquinol-cytochrome c reductase complex (complex III or cytochrome b-c1 complex) that is part of the mitochondrial respiratory chain. The b-c1 complex mediates electron transfer from ubiquinol to cytochrome c. Contributes to the generation of a proton gradient across the mitochondrial membrane that is then used for ATP synthesis. This chain is Cytochrome b (MT-CYB), found in Chilabothrus striatus (Haitian boa constrictor).